The chain runs to 428 residues: C4-dicarboxylate transport protein (428 aa).

A run of 9 helical transmembrane segments spans residues 4-24 (SLFK…ILLG), 44-64 (LIKM…IAGM), 76-96 (VALL…LIIV), 142-162 (IGAF…MFGF), 184-204 (VIFG…FGAM), 222-242 (LIVC…GSIA), 289-309 (VVGL…SIYL), 326-346 (IFHQ…AAGV), and 352-372 (IVLA…LALI).

It belongs to the dicarboxylate/amino acid:cation symporter (DAACS) (TC 2.A.23) family.

The protein localises to the cell inner membrane. In terms of biological role, responsible for the transport of dicarboxylates such as succinate, fumarate, and malate from the periplasm across the membrane. The protein is C4-dicarboxylate transport protein of Citrobacter koseri (strain ATCC BAA-895 / CDC 4225-83 / SGSC4696).